The chain runs to 281 residues: Probable endonuclease 4 (281 aa).

Residues His-69, His-109, Glu-145, Asp-179, His-182, His-216, Asp-229, His-231, and Glu-261 each contribute to the Zn(2+) site.

It belongs to the AP endonuclease 2 family. Requires Zn(2+) as cofactor.

The enzyme catalyses Endonucleolytic cleavage to 5'-phosphooligonucleotide end-products.. Its function is as follows. Endonuclease IV plays a role in DNA repair. It cleaves phosphodiester bonds at apurinic or apyrimidinic (AP) sites, generating a 3'-hydroxyl group and a 5'-terminal sugar phosphate. The sequence is that of Probable endonuclease 4 from Chlorobaculum parvum (strain DSM 263 / NCIMB 8327) (Chlorobium vibrioforme subsp. thiosulfatophilum).